We begin with the raw amino-acid sequence, 521 residues long: MSDPVIKRALVSVSDKTGIVDFCRELSLLGVEVFSTGGTLKTLQDAGIAAASISTITGFPEIMDGRVKTLHPKIHGGLLAVRENPDHVNQANENGISFIDLVVVNLYPFEATVAKPDVTFEDAIENIDIGGPSMLRSAAKNNESVTVVTDSADYALVLQEMRNNNGATKRETRLALALKVFELTSRYDRAIASYLAGAQHEADSSMTVKLERELDMRYGENPHQSAGLYRLTDENGTRSFSDYFEKLHGKELSYNNMLDIAAAVSLIEEFRGEEPTVVIIKHTNPCGVAQAPTLAEAYRRAFSTDTQAPFGGIIAFNHPLDMEAATAVNEIFTEILIAPAFEDGVLEMLMKKKDRRLVRQTSALPKGGWEFKSTPFGMLVQERDSKIVTKEDLTVVTKRQPTEEEVADMMFAWKICKHIKSNTILYVKNRQTFGVGAGQMSRVDSSKIARWKASEVNLDLHGSVVASDAFFPFADGLLAAAEAGVTAVIQPGGSIRDNEVIEAADANNLAMVFTGMRHFKH.

The 149-residue stretch at 1–149 (MSDPVIKRAL…KNNESVTVVT (149 aa)) folds into the MGS-like domain.

This sequence belongs to the PurH family.

The catalysed reaction is (6R)-10-formyltetrahydrofolate + 5-amino-1-(5-phospho-beta-D-ribosyl)imidazole-4-carboxamide = 5-formamido-1-(5-phospho-D-ribosyl)imidazole-4-carboxamide + (6S)-5,6,7,8-tetrahydrofolate. It carries out the reaction IMP + H2O = 5-formamido-1-(5-phospho-D-ribosyl)imidazole-4-carboxamide. Its pathway is purine metabolism; IMP biosynthesis via de novo pathway; 5-formamido-1-(5-phospho-D-ribosyl)imidazole-4-carboxamide from 5-amino-1-(5-phospho-D-ribosyl)imidazole-4-carboxamide (10-formyl THF route): step 1/1. It functions in the pathway purine metabolism; IMP biosynthesis via de novo pathway; IMP from 5-formamido-1-(5-phospho-D-ribosyl)imidazole-4-carboxamide: step 1/1. In Chlorobium phaeobacteroides (strain DSM 266 / SMG 266 / 2430), this protein is Bifunctional purine biosynthesis protein PurH.